We begin with the raw amino-acid sequence, 194 residues long: Ribonuclease HII (194 aa).

The RNase H type-2 domain occupies 3 to 193; that stretch reads ILTAGVDEAG…VRNLLAQQAL (191 aa). A divalent metal cation is bound by residues D9, E10, and D101.

Belongs to the RNase HII family. Mn(2+) serves as cofactor. Requires Mg(2+) as cofactor.

The protein localises to the cytoplasm. It carries out the reaction Endonucleolytic cleavage to 5'-phosphomonoester.. In terms of biological role, endonuclease that specifically degrades the RNA of RNA-DNA hybrids. This Neisseria meningitidis serogroup A / serotype 4A (strain DSM 15465 / Z2491) protein is Ribonuclease HII (rnhB).